A 425-amino-acid chain; its full sequence is Dihydroorotase (425 aa).

Residues His61 and His63 each coordinate Zn(2+). Substrate is bound by residues 63–65 (HLR) and Asn95. Zn(2+) contacts are provided by Lys146, His175, His224, and Asp293. Lys146 bears the N6-carboxylysine mark. Residue Asp293 is part of the active site. Substrate is bound by residues His297 and 311-312 (PG).

It belongs to the metallo-dependent hydrolases superfamily. DHOase family. Class I DHOase subfamily. It depends on Zn(2+) as a cofactor.

It catalyses the reaction (S)-dihydroorotate + H2O = N-carbamoyl-L-aspartate + H(+). The protein operates within pyrimidine metabolism; UMP biosynthesis via de novo pathway; (S)-dihydroorotate from bicarbonate: step 3/3. Functionally, catalyzes the reversible cyclization of carbamoyl aspartate to dihydroorotate. This is Dihydroorotase from Aeropyrum pernix (strain ATCC 700893 / DSM 11879 / JCM 9820 / NBRC 100138 / K1).